A 250-amino-acid chain; its full sequence is Small ribosomal subunit protein uS3 (250 aa).

Residues 39–107 (VRAALKKRLY…EVHLNIVEIR (69 aa)) form the KH type-2 domain. The disordered stretch occupies residues 215–250 (LDKRLATESGPAGEGGGRERGDRPDRGDRRDRRDRA). Basic and acidic residues predominate over residues 230–250 (GGRERGDRPDRGDRRDRRDRA).

The protein belongs to the universal ribosomal protein uS3 family. Part of the 30S ribosomal subunit. Forms a tight complex with proteins S10 and S14.

Its function is as follows. Binds the lower part of the 30S subunit head. Binds mRNA in the 70S ribosome, positioning it for translation. This Caulobacter vibrioides (strain ATCC 19089 / CIP 103742 / CB 15) (Caulobacter crescentus) protein is Small ribosomal subunit protein uS3.